The chain runs to 338 residues: Ferrochelatase (338 aa).

His202 and Glu283 together coordinate Fe cation.

It belongs to the ferrochelatase family.

The protein resides in the cytoplasm. It carries out the reaction heme b + 2 H(+) = protoporphyrin IX + Fe(2+). It participates in porphyrin-containing compound metabolism; protoheme biosynthesis; protoheme from protoporphyrin-IX: step 1/1. Its function is as follows. Catalyzes the ferrous insertion into protoporphyrin IX. The polypeptide is Ferrochelatase (Acinetobacter baumannii (strain AB307-0294)).